We begin with the raw amino-acid sequence, 652 residues long: MELKGVHQQNGTSNGTGAVGAEGESAPPTAPATAEAAASLETTTEKVDAEQQKPERTNWGNGLEFLMSCISVSVGLGNVWRFPFTAYENGGGAFLIPYIIVLFLIGKPMYYLEMIMGQFTSQGTVKIWSVVPGFVGVGYGQAFATICIITYYSSLLALTLYYLFVSFQSVLPWSYCWEEWMNCVDSRPQEDTDALLLSSSNVTNVTALTDTVKLQSSSELYFLNVVIKEKMDISDGIGDPDWKLTLALFVSWVVIFLVIMRGVKSSGKAAYFLALFPYVVLFILLVRAVTLEGARDGIIFFLEPQWGELLNPTVWKNAVVQCFFSLAVGSGPIIMFASYNRFDHGIYRDAMIVTTLDTLTSLLGGITIFAILGNLAHNLQIENIRDVVRSGTGLAFISYPDAISKFQAVPQLFSVLFFFMLFVLGIGSIVALQSTIVTILCDQFKSWKYWKVALATSICGFLMGLVYVTPGGQWILTLVDFYGGTYVVFILAIFELAGIVWIYGMQNFCDDVEFMCNRRVSLYWRVCWSFFTPVMMIVIFIYSMVTIEPITYSEQFFPEAGNVAGWLLFGIGAAQFPLWWMWYISQHREGSLGQSFVASLRPSDKWGPANPETKRQWVIFKNEKAAQRATKKQSSKLGAFWQKLGHFCGSNT.

The segment at 1–54 (MELKGVHQQNGTSNGTGAVGAEGESAPPTAPATAEAAASLETTTEKVDAEQQKP) is disordered. At 1–58 (MELKGVHQQNGTSNGTGAVGAEGESAPPTAPATAEAAASLETTTEKVDAEQQKPERTN) the chain is on the cytoplasmic side. A compositionally biased stretch (polar residues) spans 7–16 (HQQNGTSNGT). A compositionally biased stretch (low complexity) spans 21–42 (AEGESAPPTAPATAEAAASLET). Residues 43–54 (TTEKVDAEQQKP) show a composition bias toward basic and acidic residues. 4 helical membrane passes run 59-79 (WGNG…LGNV), 92-112 (GAFL…MYYL), 130-150 (VVPG…CIIT), and 155-175 (LLAL…PWSY). N-linked (GlcNAc...) asparagine glycans are attached at residues asparagine 201 and asparagine 204. 9 helical membrane passes run 240-260 (PDWK…LVIM), 269-289 (AAYF…VRAV), 318-338 (AVVQ…MFAS), 352-372 (IVTT…FAIL), 412-432 (LFSV…IVAL), 458-478 (ICGF…ILTL), 485-505 (TYVV…IYGM), 527-547 (CWSF…MVTI), and 564-584 (AGWL…MWYI).

This sequence belongs to the sodium:neurotransmitter symporter (SNF) (TC 2.A.22) family.

Its subcellular location is the membrane. Unusual broad substrate spectrum amino acid:sodium cotransporter that promotes absorption of the D isomers of essential amino acids. Neutral amino acids are the preferred substrates, especially methionine and phenylalanine. The protein is Sodium-dependent nutrient amino acid transporter 1 of Drosophila persimilis (Fruit fly).